Reading from the N-terminus, the 364-residue chain is Chorismate synthase (364 aa).

Residue Arg47 participates in NADP(+) binding. FMN is bound by residues 124–126 (RGS), 240–241 (NA), Gly284, 299–303 (KPTPS), and Arg326.

It belongs to the chorismate synthase family. The cofactor is FMNH2.

It catalyses the reaction 5-O-(1-carboxyvinyl)-3-phosphoshikimate = chorismate + phosphate. It participates in metabolic intermediate biosynthesis; chorismate biosynthesis; chorismate from D-erythrose 4-phosphate and phosphoenolpyruvate: step 7/7. Its function is as follows. Catalyzes the anti-1,4-elimination of the C-3 phosphate and the C-6 proR hydrogen from 5-enolpyruvylshikimate-3-phosphate (EPSP) to yield chorismate, which is the branch point compound that serves as the starting substrate for the three terminal pathways of aromatic amino acid biosynthesis. This reaction introduces a second double bond into the aromatic ring system. The chain is Chorismate synthase from Methanobrevibacter smithii (strain ATCC 35061 / DSM 861 / OCM 144 / PS).